Here is a 159-residue protein sequence, read N- to C-terminus: MRIGHGFDVHAFGGEGPIIIGGVRIPYEKGLLAHSDGDVALHALTDALLGAAAQGDIGKLFPDTDPAFKGADSRELLREAWRRIQAKGYALGNVDVTIIAQAPKMLPHIPQMRVFIAEDLGCHMDDVNVKATTTEKLGFTGRGEGIACEAVALLIKATK.

The a divalent metal cation site is built by Asp8 and His10. 4-CDP-2-C-methyl-D-erythritol 2-phosphate contacts are provided by residues 8–10 and 34–35; these read DVH and HS. His42 contributes to the a divalent metal cation binding site. Residues 56 to 58, 61 to 65, 100 to 106, 132 to 135, Phe139, and Arg142 contribute to the 4-CDP-2-C-methyl-D-erythritol 2-phosphate site; these read DIG, FPDTD, AQAPKML, and TTTE.

Belongs to the IspF family. As to quaternary structure, homotrimer. Requires a divalent metal cation as cofactor.

The enzyme catalyses 4-CDP-2-C-methyl-D-erythritol 2-phosphate = 2-C-methyl-D-erythritol 2,4-cyclic diphosphate + CMP. It functions in the pathway isoprenoid biosynthesis; isopentenyl diphosphate biosynthesis via DXP pathway; isopentenyl diphosphate from 1-deoxy-D-xylulose 5-phosphate: step 4/6. Functionally, involved in the biosynthesis of isopentenyl diphosphate (IPP) and dimethylallyl diphosphate (DMAPP), two major building blocks of isoprenoid compounds. Catalyzes the conversion of 4-diphosphocytidyl-2-C-methyl-D-erythritol 2-phosphate (CDP-ME2P) to 2-C-methyl-D-erythritol 2,4-cyclodiphosphate (ME-CPP) with a corresponding release of cytidine 5-monophosphate (CMP). The polypeptide is 2-C-methyl-D-erythritol 2,4-cyclodiphosphate synthase (Escherichia coli O127:H6 (strain E2348/69 / EPEC)).